A 187-amino-acid chain; its full sequence is Large ribosomal subunit protein uL22A (187 aa).

Belongs to the universal ribosomal protein uL22 family. As to quaternary structure, component of the large ribosomal subunit (LSU). Mature yeast ribosomes consist of a small (40S) and a large (60S) subunit. The 40S small subunit contains 1 molecule of ribosomal RNA (18S rRNA) and at least 33 different proteins. The large 60S subunit contains 3 rRNA molecules (25S, 5.8S and 5S rRNA) and at least 46 different proteins. uL22 is associated with the polypeptide exit tunnel.

The protein resides in the cytoplasm. In terms of biological role, component of the ribosome, a large ribonucleoprotein complex responsible for the synthesis of proteins in the cell. The small ribosomal subunit (SSU) binds messenger RNAs (mRNAs) and translates the encoded message by selecting cognate aminoacyl-transfer RNA (tRNA) molecules. The large subunit (LSU) contains the ribosomal catalytic site termed the peptidyl transferase center (PTC), which catalyzes the formation of peptide bonds, thereby polymerizing the amino acids delivered by tRNAs into a polypeptide chain. The nascent polypeptides leave the ribosome through a tunnel in the LSU and interact with protein factors that function in enzymatic processing, targeting, and the membrane insertion of nascent chains at the exit of the ribosomal tunnel. This chain is Large ribosomal subunit protein uL22A (rpl1701), found in Schizosaccharomyces pombe (strain 972 / ATCC 24843) (Fission yeast).